The following is a 427-amino-acid chain: tRNA(Ile)-lysidine synthase (427 aa).

25–30 serves as a coordination point for ATP; it reads SGGLDS.

The protein belongs to the tRNA(Ile)-lysidine synthase family.

Its subcellular location is the cytoplasm. It carries out the reaction cytidine(34) in tRNA(Ile2) + L-lysine + ATP = lysidine(34) in tRNA(Ile2) + AMP + diphosphate + H(+). Its function is as follows. Ligates lysine onto the cytidine present at position 34 of the AUA codon-specific tRNA(Ile) that contains the anticodon CAU, in an ATP-dependent manner. Cytidine is converted to lysidine, thus changing the amino acid specificity of the tRNA from methionine to isoleucine. The polypeptide is tRNA(Ile)-lysidine synthase (Histophilus somni (strain 2336) (Haemophilus somnus)).